We begin with the raw amino-acid sequence, 284 residues long: 2-dehydro-3-deoxyphosphooctonate aldolase (284 aa).

This sequence belongs to the KdsA family.

It localises to the cytoplasm. The enzyme catalyses D-arabinose 5-phosphate + phosphoenolpyruvate + H2O = 3-deoxy-alpha-D-manno-2-octulosonate-8-phosphate + phosphate. It participates in carbohydrate biosynthesis; 3-deoxy-D-manno-octulosonate biosynthesis; 3-deoxy-D-manno-octulosonate from D-ribulose 5-phosphate: step 2/3. Its pathway is bacterial outer membrane biogenesis; lipopolysaccharide biosynthesis. The polypeptide is 2-dehydro-3-deoxyphosphooctonate aldolase (Serratia proteamaculans (strain 568)).